Consider the following 528-residue polypeptide: Light-independent protochlorophyllide reductase subunit B (528 aa).

[4Fe-4S] cluster is bound at residue Asp36. Residue Asp274 is the Proton donor of the active site. Position 409–410 (409–410) interacts with substrate; that stretch reads GL. The interval 429-471 is disordered; that stretch reads GPSHHGGHAPKPMHDAPAASAAAGAEASMAEETAAPSQDAPAA. The segment covering 444-465 has biased composition (low complexity); it reads APAASAAAGAEASMAEETAAPS.

Belongs to the ChlB/BchB/BchZ family. In terms of assembly, protochlorophyllide reductase is composed of three subunits; BchL, BchN and BchB. Forms a heterotetramer of two BchB and two BchN subunits. It depends on [4Fe-4S] cluster as a cofactor.

It catalyses the reaction chlorophyllide a + oxidized 2[4Fe-4S]-[ferredoxin] + 2 ADP + 2 phosphate = protochlorophyllide a + reduced 2[4Fe-4S]-[ferredoxin] + 2 ATP + 2 H2O. It participates in porphyrin-containing compound metabolism; bacteriochlorophyll biosynthesis (light-independent). Component of the dark-operative protochlorophyllide reductase (DPOR) that uses Mg-ATP and reduced ferredoxin to reduce ring D of protochlorophyllide (Pchlide) to form chlorophyllide a (Chlide). This reaction is light-independent. The NB-protein (BchN-BchB) is the catalytic component of the complex. The polypeptide is Light-independent protochlorophyllide reductase subunit B (Dinoroseobacter shibae (strain DSM 16493 / NCIMB 14021 / DFL 12)).